We begin with the raw amino-acid sequence, 445 residues long: UPF0210 protein Sez_0396 (445 aa).

Belongs to the UPF0210 family. Homodimer.

The chain is UPF0210 protein Sez_0396 from Streptococcus equi subsp. zooepidemicus (strain MGCS10565).